The following is a 34-amino-acid chain: Photosystem II reaction center protein M (34 aa).

The chain crosses the membrane as a helical span at residues I5 to I25.

It belongs to the PsbM family. In terms of assembly, PSII is composed of 1 copy each of membrane proteins PsbA, PsbB, PsbC, PsbD, PsbE, PsbF, PsbH, PsbI, PsbJ, PsbK, PsbL, PsbM, PsbT, PsbX, PsbY, PsbZ, Psb30/Ycf12, at least 3 peripheral proteins of the oxygen-evolving complex and a large number of cofactors. It forms dimeric complexes.

It is found in the plastid. It localises to the chloroplast thylakoid membrane. In terms of biological role, one of the components of the core complex of photosystem II (PSII). PSII is a light-driven water:plastoquinone oxidoreductase that uses light energy to abstract electrons from H(2)O, generating O(2) and a proton gradient subsequently used for ATP formation. It consists of a core antenna complex that captures photons, and an electron transfer chain that converts photonic excitation into a charge separation. This subunit is found at the monomer-monomer interface. In Triticum aestivum (Wheat), this protein is Photosystem II reaction center protein M.